The primary structure comprises 266 residues: MKAVVLTLAVLFLTGSQARHFWQQDEPQSPWDRVKDLATVYVDVVKDGGRDYVAQFEASALGKQLNLKLLDNWDTLSSTVAKLREQIGPVTQEFWDNLEKETEVLRQEMNKDLEEVKKKVQPYLDEFQSKWHEEVELYRQKVAPLGAELSEGARQKLQELQEKLSPLGEELRDRARTHVDALRAQLAPYSDQLRERLATRLQALKEGGGAALAEYHAKASEQLSVLREKAKPALEDLRQGLLPVLESFRTSLLAAVDEATKKLNAQ.

Positions 1 to 18 (MKAVVLTLAVLFLTGSQA) are cleaved as a signal peptide. Repeat copies occupy residues 67-88 (LKLLDNWDTLSSTVAKLREQIG) and 89-110 (PVTQEFWDNLEKETEVLRQEMN). Residues 67–266 (LKLLDNWDTL…DEATKKLNAQ (200 aa)) are 10 X approximate tandem repeats. Methionine sulfoxide is present on M109. Residues 111–121 (KDLEEVKKKVQ) form a 3; half-length repeat. 5 repeat units span residues 122–143 (PYLDEFQSKWHEEVELYRQKVA), 144–165 (PLGAELSEGARQKLQELQEKLS), 166–187 (PLGEELRDRARTHVDALRAQLA), 188–209 (PYSDQLRERLATRLQALKEGGG), and 210–231 (AALAEYHAKASEQLSVLREKAK). One copy of the 9; half-length repeat lies at 232 to 242 (PALEDLRQGLL). Repeat 10 spans residues 243-266 (PVLESFRTSLLAAVDEATKKLNAQ).

This sequence belongs to the apolipoprotein A1/A4/E family. As to quaternary structure, homodimer. Interacts with APOA1BP and CLU. Component of a sperm activating protein complex (SPAP), consisting of APOA1, an immunoglobulin heavy chain, an immunoglobulin light chain and albumin. Interacts with NDRG1. Interacts with SCGB3A2. Interacts with NAXE and YJEFN3. In terms of processing, glycosylated. Palmitoylated. Post-translationally, phosphorylation sites are present in the extracellular medium.

The protein resides in the secreted. Its function is as follows. Participates in the reverse transport of cholesterol from tissues to the liver for excretion by promoting cholesterol efflux from tissues and by acting as a cofactor for the lecithin cholesterol acyltransferase (LCAT). As part of the SPAP complex, activates spermatozoa motility. This is Apolipoprotein A-I (APOA1) from Odobenus rosmarus divergens (Pacific walrus).